The primary structure comprises 176 residues: Dual-action ribosomal maturation protein DarP (176 aa).

Residues 1–16 (MRLIDPDADLEFDPDS) show a composition bias toward acidic residues. The tract at residues 1-29 (MRLIDPDADLEFDPDSVYDGPSKSQKKRE) is disordered.

Belongs to the DarP family.

It localises to the cytoplasm. Functionally, member of a network of 50S ribosomal subunit biogenesis factors which assembles along the 30S-50S interface, preventing incorrect 23S rRNA structures from forming. Promotes peptidyl transferase center (PTC) maturation. The protein is Dual-action ribosomal maturation protein DarP of Thiobacillus denitrificans (strain ATCC 25259 / T1).